A 173-amino-acid polypeptide reads, in one-letter code: Adenine phosphoribosyltransferase (173 aa).

This sequence belongs to the purine/pyrimidine phosphoribosyltransferase family. As to quaternary structure, homodimer.

It is found in the cytoplasm. It catalyses the reaction AMP + diphosphate = 5-phospho-alpha-D-ribose 1-diphosphate + adenine. It participates in purine metabolism; AMP biosynthesis via salvage pathway; AMP from adenine: step 1/1. Functionally, catalyzes a salvage reaction resulting in the formation of AMP, that is energically less costly than de novo synthesis. The sequence is that of Adenine phosphoribosyltransferase from Thermoanaerobacter pseudethanolicus (strain ATCC 33223 / 39E) (Clostridium thermohydrosulfuricum).